We begin with the raw amino-acid sequence, 364 residues long: Medium-wave-sensitive opsin 2 (364 aa).

The tract at residues 1–23 (MAQQWSLQRLAGRHPQDSYEDST) is disordered. At 1-52 (MAQQWSLQRLAGRHPQDSYEDSTQSSIFTYTNSNSTRGPFEGPNYHIAPRWV) the chain is on the extracellular side. The segment at 17–43 (DSYEDSTQSSIFTYTNSNSTRGPFEGP) is required for 11-cis-retinal regeneration. A glycan (N-linked (GlcNAc...) asparagine) is linked at N34. Residues 53–77 (YHLTSVWMIFVVIASVFTNGLVLAA) traverse the membrane as a helical segment. Topologically, residues 78–89 (TMKFKKLRHPLN) are cytoplasmic. A helical transmembrane segment spans residues 90–115 (WILVNLAVADLAETVIASTISVVNQV). Residues 116–129 (YGYFVLGHPMCVLE) are Extracellular-facing. C126 and C203 are disulfide-bonded. Residues 130 to 149 (GYTVSLCGITGLWSLAIISW) form a helical membrane-spanning segment. Topologically, residues 150–168 (ERWMVVCKPFGNVRFDAKL) are cytoplasmic. A helical membrane pass occupies residues 169 to 192 (AIVGIAFSWIWAAVWTAPPIFGWS). The Extracellular portion of the chain corresponds to 193-218 (RYWPHGLKTSCGPDVFSGSSYPGVQS). Residues 219–246 (YMIVLMVTCCITPLSIIVLCYLQVWLAI) traverse the membrane as a helical segment. Residues 247 to 268 (RAVAKQQKESESTQKAEKEVTR) are Cytoplasmic-facing. The chain crosses the membrane as a helical span at residues 269–292 (MVVVMVLAFCFCWGPYAFFACFAA). The Extracellular segment spans residues 293 to 300 (ANPGYPFH). A helical membrane pass occupies residues 301–325 (PLMAALPAFFAKSATIYNPVIYVFM). Position 312 is an N6-(retinylidene)lysine (K312). At 326–364 (NRQFRNCILQLFGKKVDDGSELSSASKTEVSSVSSVSPA) the chain is on the cytoplasmic side.

Belongs to the G-protein coupled receptor 1 family. Opsin subfamily. In terms of processing, N-glycosylated. O-glycosylated. Phosphorylated on some or all of the serine and threonine residues present in the C-terminal region.

Its subcellular location is the cell membrane. Functionally, visual pigments are the light-absorbing molecules that mediate vision. They consist of an apoprotein, opsin, covalently linked to cis-retinal. The sequence is that of Medium-wave-sensitive opsin 2 from Homo sapiens (Human).